We begin with the raw amino-acid sequence, 324 residues long: NADH-quinone oxidoreductase subunit H (324 aa).

Transmembrane regions (helical) follow at residues 11 to 31 (ILITVGKAVVILLVVVTCGAF), 81 to 101 (VIFTLAPMIAFTSMLIAFAIV), 114 to 134 (IGILFFLMMAGLAVYAVLFAG), 154 to 174 (VSYEVFIGLSLMGVVAQAGSF), 186 to 206 (LWNVIPQFFGFITFAIAGVAV), 237 to 257 (FFVGEYIGIVTVSALMVTLFF), 265 to 285 (LPPFVWFALKTGFFMMMFILI), and 304 to 324 (VCLPITLLNLLATAAVILYNA).

This sequence belongs to the complex I subunit 1 family. As to quaternary structure, NDH-1 is composed of 13 different subunits. Subunits NuoA, H, J, K, L, M, N constitute the membrane sector of the complex.

It is found in the cell inner membrane. The catalysed reaction is a quinone + NADH + 5 H(+)(in) = a quinol + NAD(+) + 4 H(+)(out). NDH-1 shuttles electrons from NADH, via FMN and iron-sulfur (Fe-S) centers, to quinones in the respiratory chain. The immediate electron acceptor for the enzyme in this species is believed to be ubiquinone. Couples the redox reaction to proton translocation (for every two electrons transferred, four hydrogen ions are translocated across the cytoplasmic membrane), and thus conserves the redox energy in a proton gradient. This subunit may bind ubiquinone. The chain is NADH-quinone oxidoreductase subunit H from Pectobacterium atrosepticum (strain SCRI 1043 / ATCC BAA-672) (Erwinia carotovora subsp. atroseptica).